A 301-amino-acid chain; its full sequence is Probable alpha-L-glutamate ligase (301 aa).

An ATP-grasp domain is found at 104–287; the sequence is LQLLSRRGIG…VAGIIIEHIE (184 aa). Residues K141, 178–179, D187, and 211–213 contribute to the ATP site; these read EY and RSN. 3 residues coordinate Mg(2+): D248, E260, and N262. The Mn(2+) site is built by D248, E260, and N262.

Belongs to the RimK family. Mg(2+) is required as a cofactor. Requires Mn(2+) as cofactor.

The chain is Probable alpha-L-glutamate ligase from Pseudomonas fluorescens (strain ATCC BAA-477 / NRRL B-23932 / Pf-5).